We begin with the raw amino-acid sequence, 163 residues long: UPF0587 protein CG4646 (163 aa).

Residues Cys-33, Cys-36, Cys-68, and Cys-71 each contribute to the Zn(2+) site.

The protein belongs to the UPF0587 family.

This chain is UPF0587 protein CG4646, found in Drosophila melanogaster (Fruit fly).